Reading from the N-terminus, the 273-residue chain is Homeobox protein Nkx-2.2 (273 aa).

2 disordered regions span residues methionine 1 to valine 56 and alanine 91 to arginine 131. Residues aspartate 20–glycine 38 are compositionally biased toward acidic residues. Residues lysine 128 to arginine 187 constitute a DNA-binding region (homeobox).

Belongs to the NK-2 homeobox family. Interacts with OLIG2. Expressed in restricted areas of the developing CNS: the hindbrain and forebrain, and pancreas.

The protein localises to the nucleus. Transcriptional activator involved in the development of insulin-producting beta cells in the endocrine pancreas. May also be involved in specifying diencephalic neuromeric boundaries, and in controlling the expression of genes that play a role in axonal guidance. Binds to elements within the NEUROD1 promoter. In Mus musculus (Mouse), this protein is Homeobox protein Nkx-2.2 (Nkx2-2).